The sequence spans 199 residues: Protein-methionine-sulfoxide reductase heme-binding subunit MsrQ (199 aa).

4 helical membrane passes run 10 to 30, 82 to 102, 116 to 136, and 153 to 173; these read WLKVCLHLAGFLPLLWLFWAI, LWCFVWATLHLTSYALLELGI, PYLTLGIISWLVLLALTLTST, and VVYLVAILAPIHYLWSVKILS.

This sequence belongs to the MsrQ family. Heterodimer of a catalytic subunit (MsrP) and a heme-binding subunit (MsrQ). FMN serves as cofactor. Requires heme b as cofactor.

It localises to the cell inner membrane. In terms of biological role, part of the MsrPQ system that repairs oxidized periplasmic proteins containing methionine sulfoxide residues (Met-O), using respiratory chain electrons. Thus protects these proteins from oxidative-stress damage caused by reactive species of oxygen and chlorine generated by the host defense mechanisms. MsrPQ is essential for the maintenance of envelope integrity under bleach stress, rescuing a wide series of structurally unrelated periplasmic proteins from methionine oxidation, including the primary periplasmic chaperone SurA and the lipoprotein Pal. MsrQ provides electrons for reduction to the reductase catalytic subunit MsrP, using the quinone pool of the respiratory chain. This chain is Protein-methionine-sulfoxide reductase heme-binding subunit MsrQ, found in Salmonella dublin (strain CT_02021853).